A 107-amino-acid chain; its full sequence is MSISISDSAAQRVSAFLNNRGKGLGLRLGVRTSGCSGMAYILEFVDEMNDDDIVFEDKGVKVIIDGKSMVYLDGTELDFVKEGLNEGFKFNNPNVSSECGCGESFNV.

The Fe cation site is built by Cys-35, Cys-99, and Cys-101.

Belongs to the HesB/IscA family. As to quaternary structure, homodimer; may form tetramers and higher multimers. Fe cation serves as cofactor.

Is able to transfer iron-sulfur clusters to apo-ferredoxin. Multiple cycles of [2Fe2S] cluster formation and transfer are observed, suggesting that IscA acts catalytically. Recruits intracellular free iron so as to provide iron for the assembly of transient iron-sulfur cluster in IscU in the presence of IscS, L-cysteine and the thioredoxin reductase system TrxA/TrxB. The sequence is that of Iron-binding protein IscA from Yersinia enterocolitica serotype O:8 / biotype 1B (strain NCTC 13174 / 8081).